The following is a 104-amino-acid chain: Type VII secretion system extracellular protein B (104 aa).

This sequence belongs to the WXG100 family. As to quaternary structure, homodimer. When mixed with EsxA does not form heterodimers.

The protein localises to the secreted. Functionally, virulence factor that is important for the establishment of infection in the host. EsxB is required for EsxA synthesis as well as secretion. Mediates together with EsxA the release of S.aureus from the host cell. Also inhibits host cytokine production and thus modulates dendritic cell-mediated immunity. In Staphylococcus aureus (strain Mu50 / ATCC 700699), this protein is Type VII secretion system extracellular protein B.